A 486-amino-acid polypeptide reads, in one-letter code: Vesicular GABA transporter (486 aa).

The Cytoplasmic portion of the chain corresponds to 1-93; it reads MASNRFQNLQ…EASEPISALQ (93 aa). Positions 29 to 46 are enriched in polar residues; sequence LNEVPSYQNQPQTGESGS. The disordered stretch occupies residues 29 to 85; the sequence is LNEVPSYQNQPQTGESGSNPPPHDRLEPIQESVVSEQPQKDDINKQEEAKDDGHGEA. The span at 66 to 85 shows a compositional bias: basic and acidic residues; the sequence is PQKDDINKQEEAKDDGHGEA. The helical transmembrane segment at 94 to 114 threads the bilayer; sequence AAWNVTNAIQGMFIVGLPIAV. At 115-119 the chain is on the lumenal, vesicle side; it reads KVGGW. The helical transmembrane segment at 120–140 threads the bilayer; the sequence is WSIGAMVGVAYVCYWTGVLLI. The Cytoplasmic portion of the chain corresponds to 141-167; the sequence is ECLYENGVKKRKTYREIADFYKPGFGK. The chain crosses the membrane as a helical span at residues 168–188; sequence WVLAAQLTELLSTCIIYLVLA. Residues 189 to 203 are Lumenal, vesicle-facing; the sequence is ADLLQSCFPSVDKAG. A helical membrane pass occupies residues 204–224; the sequence is WMMITSASLLTCSFLDDLQIV. Residues 225–228 are Cytoplasmic-facing; sequence SRLS. A helical transmembrane segment spans residues 229 to 249; that stretch reads FFNAISHLIVNLIMVLYCLSF. Residues 250–263 lie on the Lumenal, vesicle side of the membrane; that stretch reads VSQWSFSTITFSLN. A helical transmembrane segment spans residues 264-284; sequence INTLPTIVGMVVFGYTSHIFL. The Cytoplasmic segment spans residues 285-305; sequence PNLEGNMKNPAQFNVMLKWSH. A helical transmembrane segment spans residues 306–326; it reads IAAAVFKVVFGMLGFLTFGEL. Topologically, residues 327–341 are lumenal, vesicle; the sequence is TQEEISNSLPNQSFK. An N-linked (GlcNAc...) asparagine glycan is attached at asparagine 337. A helical membrane pass occupies residues 342–362; that stretch reads ILVNLILVVKALLSYPLPFYA. The Cytoplasmic portion of the chain corresponds to 363 to 398; that stretch reads AVQLLKNNLFLGYPQTPFTSCYSPDKSLREWAVTLR. Residues 399–419 traverse the membrane as a helical segment; that stretch reads IILVLFTLFVALSVPYLVELM. At 420 to 421 the chain is on the lumenal, vesicle side; it reads GL. A helical membrane pass occupies residues 422 to 442; that stretch reads VGNITGTMLSFIWPALFHLYI. Over 443–457 the chain is Cytoplasmic; it reads KEKTLNNFEKRFDQG. A helical membrane pass occupies residues 458–478; sequence IIIMGCSVCISGVYFSSMELL. Residues 479–486 are Lumenal, vesicle-facing; that stretch reads RAINSADS.

This sequence belongs to the amino acid/polyamine transporter 2 family.

Its subcellular location is the cytoplasmic vesicle membrane. Functionally, involved in the uptake of GABA into the synaptic vesicles. In Caenorhabditis elegans, this protein is Vesicular GABA transporter (unc-47).